We begin with the raw amino-acid sequence, 417 residues long: Hydroxysteroid dehydrogenase-like protein 2 (417 aa).

NADP(+) contacts are provided by residues 17-23 (GASRGIG), Lys42, and Asp74. Tyr168 functions as the Proton acceptor in the catalytic mechanism. NADP(+) is bound at residue Lys172. Residues 306-414 (ASPLQETFKA…KLEKILGQMN (109 aa)) enclose the SCP2 domain.

The protein belongs to the short-chain dehydrogenases/reductases (SDR) family.

The protein resides in the peroxisome. The protein localises to the mitochondrion. Functionally, has apparently no steroid dehydrogenase activity. Might act as a metabolic regulator that affects systemic adaptation to nutritional cues. The protein is Hydroxysteroid dehydrogenase-like protein 2 (hsdl2) of Xenopus laevis (African clawed frog).